The primary structure comprises 1009 residues: Protein translocase subunit SecA (1009 aa).

Residues Gln86, 104 to 108, and Asp497 each bind ATP; that span reads GEGKT. Disordered stretches follow at residues 869-894 and 949-1009; these read AVPQ…GQQP and ERRP…RNAG. Low complexity-rich tracts occupy residues 883–894 and 953–973; these read PVPAATAPGQQP and SGAA…AGAG. Cys990, Cys992, Cys1001, and His1002 together coordinate Zn(2+).

This sequence belongs to the SecA family. Monomer and homodimer. Part of the essential Sec protein translocation apparatus which comprises SecA, SecYEG and auxiliary proteins SecDF. Other proteins may also be involved. It depends on Zn(2+) as a cofactor.

It is found in the cell membrane. It localises to the cytoplasm. The enzyme catalyses ATP + H2O + cellular proteinSide 1 = ADP + phosphate + cellular proteinSide 2.. In terms of biological role, part of the Sec protein translocase complex. Interacts with the SecYEG preprotein conducting channel. Has a central role in coupling the hydrolysis of ATP to the transfer of proteins into and across the cell membrane, serving as an ATP-driven molecular motor driving the stepwise translocation of polypeptide chains across the membrane. The polypeptide is Protein translocase subunit SecA (Acidothermus cellulolyticus (strain ATCC 43068 / DSM 8971 / 11B)).